Here is an 850-residue protein sequence, read N- to C-terminus: MEPERKGLSLASSSDGDGREENKLKQGISQDLASSSRLDRYKIARQLTEKAIKEKKIFSIYGHYPVVRAALRRKGWVEKKFHFLPKVIPDVEDEGARVNDDTCAKVKENQEMALEKTDNIHDVMSRLVKNEMPYLLWTIKRDIIDYHSLTYDQMLNHYAKTASFTTKIGLCVNMRSLPWYVPANPDSFFPRCYSLCTESEQQEFLEDFRRTMASSILKWVVSHQSCSRSSRSKPRDQREEAGSSDLSSRQDAENAEAKLRGLPGQLVDIACKVCQAYLGQLEHEDIDTSADAVEDLTEAEWEDLTQQYYSLVHGDAFISNSRNYFSQCQALLNRITSVNPQTDIDGLRNIWIIKPAAKSRGRDIVCMDRVEEILELAAADHPLSRDNKWVVQKYIETPLLICDTKFDIRQWFLVTDWNPLTIWFYKESYLRFSTQRFSLDKLDSAIHLCNNAVQKYLKNDVGRSPLLPAHNMWTSTRFQEYLQRQGRGAVWGSVIYPSMKKAIAHAMKVAQDHVEPRKNSFELYGADFVLGRDFRPWLIEINSSPTMHPSTPVTAQLCAQVQEDTIKVAVDRSCDIGNFELLWRQPVVEPPPFSGSDLCVAGVSVRRARRQVLPVCNLKASASLLDAQPLKARGPSAMPDPAQGPPSPALQRDLGLKEEKGLPLALLAPLRGAAESGGAAQPTRTKAAGKVELPACPCRHVDSQAPNTGVPVAQPAKSWDPNQLNAHPLEPVLRGLKTAEGALRPPPGGKGEGTVCSRLPHHGHHVAACQTTGTTWDGGPGVCFLRQLLASELPMGPGLPRDPRAPPCLVCRGLLPPAGPCKRCRSFCAAVLQGASFVRLGGRSCSPRTP.

Disordered regions lie at residues 1 to 29 (MEPE…QGIS) and 228 to 254 (RSSR…DAEN). One can recognise a TTL domain in the interval 222–580 (SHQSCSRSSR…DRSCDIGNFE (359 aa)). ATP-binding positions include lysine 354, 360-361 (RG), 392-395 (QKYI), 405-407 (KFD), and 449-450 (CN). Arginine 360 provides a ligand contact to a protein. 3 residues coordinate Mg(2+): aspartate 527, glutamate 540, and asparagine 542. Residue glutamate 540 coordinates ATP. A disordered region spans residues 627–652 (AQPLKARGPSAMPDPAQGPPSPALQR).

The cofactor is Mg(2+).

The protein resides in the cytoplasm. The protein localises to the cytoskeleton. Its subcellular location is the cell projection. It localises to the cilium. It is found in the cilium axoneme. The protein resides in the flagellum axoneme. The enzyme catalyses L-glutamyl-[protein] + glycine + ATP = glycyl-L-glutamyl-[protein] + ADP + phosphate + H(+). Functionally, monoglycylase which modifies both tubulin and non-tubulin proteins, adding a single glycine to the gamma-carboxyl groups of specific glutamate residues to generate monoglycine side chains within the C-terminal tail of target proteins. Not involved in elongation step of the polyglycylation reaction. Preferentially monoglycylates alpha-tubulin over beta-tubulin. Together with TTLL3, mediates microtubule glycylation of primary and motile cilia, which is essential for their stability and maintenance. Together with TTLL3, glycylates sperm flagella which regulates axonemal dynein motor activity, thereby controlling flagellar beat, directional sperm swimming and male fertility. Monoglycylates non-tubulin proteins such as ANP32A, ANP32B, SET, NCL and NAP1. This Homo sapiens (Human) protein is Protein monoglycylase TTLL8.